We begin with the raw amino-acid sequence, 66 residues long: Alpha-like toxin BeM9 (66 aa).

Residues 2-66 enclose the LCN-type CS-alpha/beta domain; it reads RDAYIAKPHN…VPIRIPGKCH (65 aa). 4 cysteine pairs are disulfide-bonded: Cys12-Cys65, Cys16-Cys38, Cys24-Cys48, and Cys28-Cys50.

This sequence belongs to the long (4 C-C) scorpion toxin superfamily. Sodium channel inhibitor family. Alpha subfamily. In terms of tissue distribution, expressed by the venom gland.

It is found in the secreted. In terms of biological role, alpha toxins bind voltage-independently at site-3 of sodium channels (Nav) and inhibit the inactivation of the activated channels, thereby blocking neuronal transmission. This toxin is active on both mammals and insects, since it inhibits inactivation of rNav1.4/SCN4A, hNav1.5/SCN5A, mNav1.6/SCN8A and insect BgNav1 and DmNav1 channels. In vivo, it shows paralytic activity in mice. The chain is Alpha-like toxin BeM9 from Mesobuthus eupeus (Lesser Asian scorpion).